We begin with the raw amino-acid sequence, 388 residues long: Sulfate adenylyltransferase (388 aa).

Belongs to the sulfate adenylyltransferase family.

It catalyses the reaction sulfate + ATP + H(+) = adenosine 5'-phosphosulfate + diphosphate. It participates in sulfur metabolism; hydrogen sulfide biosynthesis; sulfite from sulfate: step 1/3. In Trichodesmium erythraeum (strain IMS101), this protein is Sulfate adenylyltransferase.